The following is a 457-amino-acid chain: Siroheme synthase (457 aa).

The segment at 1-204 (MDHLPIFCQL…NDQKAITETT (204 aa)) is precorrin-2 dehydrogenase /sirohydrochlorin ferrochelatase. NAD(+) is bound by residues 22-23 (DV) and 43-44 (LA). Serine 128 is subject to Phosphoserine. The segment at 216-457 (GEVVLVGAGP…RDKLNWFSNH (242 aa)) is uroporphyrinogen-III C-methyltransferase. Proline 225 lines the S-adenosyl-L-methionine pocket. Catalysis depends on aspartate 248, which acts as the Proton acceptor. Lysine 270 (proton donor) is an active-site residue. S-adenosyl-L-methionine contacts are provided by residues 301–303 (GGD), isoleucine 306, 331–332 (TA), methionine 382, and glycine 411.

It in the N-terminal section; belongs to the precorrin-2 dehydrogenase / sirohydrochlorin ferrochelatase family. The protein in the C-terminal section; belongs to the precorrin methyltransferase family.

The enzyme catalyses uroporphyrinogen III + 2 S-adenosyl-L-methionine = precorrin-2 + 2 S-adenosyl-L-homocysteine + H(+). The catalysed reaction is precorrin-2 + NAD(+) = sirohydrochlorin + NADH + 2 H(+). It carries out the reaction siroheme + 2 H(+) = sirohydrochlorin + Fe(2+). Its pathway is cofactor biosynthesis; adenosylcobalamin biosynthesis; precorrin-2 from uroporphyrinogen III: step 1/1. It participates in cofactor biosynthesis; adenosylcobalamin biosynthesis; sirohydrochlorin from precorrin-2: step 1/1. The protein operates within porphyrin-containing compound metabolism; siroheme biosynthesis; precorrin-2 from uroporphyrinogen III: step 1/1. It functions in the pathway porphyrin-containing compound metabolism; siroheme biosynthesis; siroheme from sirohydrochlorin: step 1/1. Its pathway is porphyrin-containing compound metabolism; siroheme biosynthesis; sirohydrochlorin from precorrin-2: step 1/1. In terms of biological role, multifunctional enzyme that catalyzes the SAM-dependent methylations of uroporphyrinogen III at position C-2 and C-7 to form precorrin-2 via precorrin-1. Then it catalyzes the NAD-dependent ring dehydrogenation of precorrin-2 to yield sirohydrochlorin. Finally, it catalyzes the ferrochelation of sirohydrochlorin to yield siroheme. This chain is Siroheme synthase, found in Shigella flexneri.